A 588-amino-acid polypeptide reads, in one-letter code: Adenine deaminase (588 aa).

It belongs to the metallo-dependent hydrolases superfamily. Adenine deaminase family. In terms of assembly, homodimer. It depends on Mn(2+) as a cofactor.

The enzyme catalyses adenine + H2O + H(+) = hypoxanthine + NH4(+). In Escherichia coli O81 (strain ED1a), this protein is Adenine deaminase.